The following is a 292-amino-acid chain: Acetyl-coenzyme A carboxylase carboxyl transferase subunit beta (292 aa).

In terms of domain architecture, CoA carboxyltransferase N-terminal spans 29–292 (LWVKCSECGQ…HGVKELVQTN (264 aa)). Positions 33, 36, 52, and 55 each coordinate Zn(2+). The segment at 33–55 (CSECGQVAYRKDLISNFNVCSNC) adopts a C4-type zinc-finger fold.

This sequence belongs to the AccD/PCCB family. Acetyl-CoA carboxylase is a heterohexamer composed of biotin carboxyl carrier protein (AccB), biotin carboxylase (AccC) and two subunits each of ACCase subunit alpha (AccA) and ACCase subunit beta (AccD). Zn(2+) serves as cofactor.

The protein localises to the cytoplasm. It carries out the reaction N(6)-carboxybiotinyl-L-lysyl-[protein] + acetyl-CoA = N(6)-biotinyl-L-lysyl-[protein] + malonyl-CoA. It participates in lipid metabolism; malonyl-CoA biosynthesis; malonyl-CoA from acetyl-CoA: step 1/1. In terms of biological role, component of the acetyl coenzyme A carboxylase (ACC) complex. Biotin carboxylase (BC) catalyzes the carboxylation of biotin on its carrier protein (BCCP) and then the CO(2) group is transferred by the transcarboxylase to acetyl-CoA to form malonyl-CoA. The protein is Acetyl-coenzyme A carboxylase carboxyl transferase subunit beta of Prochlorococcus marinus subsp. pastoris (strain CCMP1986 / NIES-2087 / MED4).